Here is a 351-residue protein sequence, read N- to C-terminus: MTIAVGRAPSRGWFDVLDDWLKRDRFVFVGWSGILLFPCAFLALGGWLTGTTFVTSWYTHGLASSYLEGANFLTVAVSSPADSMGHSLLLLWGPEAQGDFTRWCQLGGLWPFVALHGAFGLIGFMLRQFEIARLVGIRPYNALAFSAPIAVFVSVFLMYPLGQSSWFFAPSFGVAAIFRFLLFLQGFHNWTLNPFHMMGVAGVLGGALLCAIHGATVENTLFEDGEGANTFRAFNPTQSEETYSMVTANRFWSQIFGIAFSNKRWLHFFMLFVPVTGLWMSAVGIVGLALNLRAYDFVSQELRAAEDPEFETFYTKNILLNEGIRAWMAPQDQPHEKFVFPEEVLPRGNAL.

A helical transmembrane segment spans residues Cys-39–Thr-59. His-116 contacts chlorophyll a. A helical membrane pass occupies residues Gly-123–Pro-139. Residues Gln-128 and Asn-141 each contribute to the pheophytin a site. Residues Val-151–Ser-164 form a helical membrane-spanning segment. His-196 is a chlorophyll a binding site. A helical membrane pass occupies residues Gly-206–Glu-226. Residues His-213 and Phe-260 each contribute to the a plastoquinone site. His-213 lines the Fe cation pocket. Fe cation is bound at residue His-267. Residues Gly-277–Arg-293 form a helical membrane-spanning segment.

Belongs to the reaction center PufL/M/PsbA/D family. As to quaternary structure, PSII is composed of 1 copy each of membrane proteins PsbA, PsbB, PsbC, PsbD, PsbE, PsbF, PsbH, PsbI, PsbJ, PsbK, PsbL, PsbM, PsbT, PsbX, PsbY, PsbZ, Psb30/Ycf12, peripheral proteins PsbO, CyanoQ (PsbQ), PsbU, PsbV and a large number of cofactors. It forms dimeric complexes. It depends on The D1/D2 heterodimer binds P680, chlorophylls that are the primary electron donor of PSII, and subsequent electron acceptors. It shares a non-heme iron and each subunit binds pheophytin, quinone, additional chlorophylls, carotenoids and lipids. There is also a Cl(-1) ion associated with D1 and D2, which is required for oxygen evolution. The PSII complex binds additional chlorophylls, carotenoids and specific lipids. as a cofactor.

The protein resides in the cellular thylakoid membrane. It catalyses the reaction 2 a plastoquinone + 4 hnu + 2 H2O = 2 a plastoquinol + O2. Photosystem II (PSII) is a light-driven water:plastoquinone oxidoreductase that uses light energy to abstract electrons from H(2)O, generating O(2) and a proton gradient subsequently used for ATP formation. It consists of a core antenna complex that captures photons, and an electron transfer chain that converts photonic excitation into a charge separation. The D1/D2 (PsbA/PsbD) reaction center heterodimer binds P680, the primary electron donor of PSII as well as several subsequent electron acceptors. D2 is needed for assembly of a stable PSII complex. The protein is Photosystem II D2 protein of Trichormus variabilis (strain ATCC 29413 / PCC 7937) (Anabaena variabilis).